The chain runs to 184 residues: Photosystem I assembly protein Ycf4 (184 aa).

Helical transmembrane passes span 21-41 (YFWATIILLGGLSFFLVGLSS) and 63-83 (IIMTFYGTAAILISLFLWLTI).

The protein belongs to the Ycf4 family.

It localises to the plastid. It is found in the chloroplast thylakoid membrane. In terms of biological role, seems to be required for the assembly of the photosystem I complex. The polypeptide is Photosystem I assembly protein Ycf4 (Gracilaria tenuistipitata var. liui (Red alga)).